The sequence spans 382 residues: MSTYTRPVMLLLSGLLLLTLAIAVLNTLVPLWLAQEHMSTWQVGVVSSSYFTGNLVGTLLTGYVIKRIGFNRSYYLASFIFAAGCAGLGLMIGFWSWLAWRFVAGIGCAMIWVVVESALMCSGTSRNRGRLLAAYMMVYYVGTFLGQLLVSKVSTELMSVLPWVTGLTLAGILPLLFTRVLNQQTENHDSTSITSMLKLRQARLGVNGCIISGIVLGSLYGLMPLYLNHKGVSNASIGFWMAVLVSAGILGQWPIGRLADKFGRLLVLRVQVFVVILGSIAMLSQAAMAPALFILGAAGFTLYPVAMAWACEKVEHHQLVAMNQALLLSYTVGSLLGPSFTAMLMQNFSDNLLFIMIASVSFIYLLMLLRNAGHTPKPVAHV.

Helical transmembrane passes span 14–34 (GLLL…LWLA), 45–65 (VVSS…GYVI), 79–99 (FIFA…SWLA), 102–122 (FVAG…LMCS), 131–151 (LLAA…LLVS), 157–177 (LMSV…PLLF), 204–224 (LGVN…GLMP), 235–255 (ASIG…QWPI), 270–290 (VQVF…AMAP), 291–311 (ALFI…AWAC), 325–345 (ALLL…AMLM), and 348–368 (FSDN…LLML).

This sequence belongs to the major facilitator superfamily. YcaD (TC 2.A.1.26) family.

The protein localises to the cell inner membrane. This is an uncharacterized protein from Escherichia coli O6:K15:H31 (strain 536 / UPEC).